Reading from the N-terminus, the 745-residue chain is MKRSSSMLDINEDSQHSTNKAPPPKKAPEDRFDSANMNASGSHVTLVENLPVEKVSSGERIAILDFGAQYGKVIDRRVRELLVQSEMFPLNTTARTLIELGGFKGIIISGGPNSVFEPEAPSIDPEIFTCGLPVLGICYGFQLMNKLNGGTVTREHIREDGACEIQVDTSVHLFNGLHKTETVLLTHGDSVSEATVAPDFKVMAKSGHHVAGICNENRKLYGVQFHPEVDLTTNGTKMFENFLFKVVGCCGNFTIQNREQSCISEINSIVGDKKVLVMVSGGVDSAVCAALLRRALGPNRVTAIHIDNGFMRHEESDAVEKSLAALDLPIHRYNFGTTFRSSTEHCKDGEVALDECDDPEMKRKIIGNTFIRVKDVIMKDLNINHDEYFLAQGTLRPDLIESASALASGHADTIKTHHNDTFLVRELRKLGKVVEPLKDFHKDEVRELGKDLGLPESIVQRHPFPGPGLAIRILCASDKRPELMFNGPMYNGDVQGRIIDVTEQFLNSAINPSQGIYEHLQFEQARNNVLLSLSERDRQLAEQQTFQISAHILPIKTVGVQGDARSYSYAVALSTEQRPIPWKLLFAYASVIPKLFHGVNRVVYAFGSKIEFSIEDLTRTYLVPHIVTKLQMADHIANNILFGRVAASDGTQLPNVGHKIQQMPVVLLPVDFDRDRDMIGSYRHSIVLRPFVTSDFMTGQAAIPGVHLPEETLIEMDKAIRTNVLGISRVLLDMTCKPPGTTEWE.

Positions 1–37 are disordered; the sequence is MKRSSSMLDINEDSQHSTNKAPPPKKAPEDRFDSANM. The Glutamine amidotransferase type-1 domain maps to 60–252; that stretch reads RIAILDFGAQ…LFKVVGCCGN (193 aa). Residue C138 is the For GATase activity of the active site. Residues H226 and E228 contribute to the active site. One can recognise a GMPS ATP-PPase domain in the interval 253–461; sequence FTIQNREQSC…LGLPESIVQR (209 aa). 280–286 is an ATP binding site; it reads SGGVDSA. 5 residues coordinate substrate: R363, D563, Q662, K737, and E743.

As to quaternary structure, homodimer.

It catalyses the reaction XMP + L-glutamine + ATP + H2O = GMP + L-glutamate + AMP + diphosphate + 2 H(+). It functions in the pathway purine metabolism; GMP biosynthesis; GMP from XMP (L-Gln route): step 1/1. The protein is Probable GMP synthase [glutamine-hydrolyzing] (gmps-1) of Caenorhabditis elegans.